Reading from the N-terminus, the 349-residue chain is MTSIYHDDDDHLTASGKDLWSNFCVLVDAAVMLYEEEEEEQRRKIVSEEEEEFQKRIFCLFPRKTRSSLVKRQQNLIRVSTSSSLIDLNQFPTDSEIEDPQNHLQGLSSSCFIAANSETKTLQNPSSEPCSSLGLFGHKTAEYQKTETKDPPNPNFPCTMSLCLMENTSRKRRAVEQRKRSGGVKKANVAPFSQTARETPEWLVKVMTNMKEAKDAKLIFEKTLFVTDVNPTKNRLSMPFNNLLRNDFLTSVESIIINEDINNNNKIGVGAILVDQRCKKWGVMLKRWEMKKESGKGSWSYNLICGWNDIVEANRLKEGDNITLWSFRCCGILCFAMEQSSSSLALCLC.

A DNA-binding region (TF-B3) is located at residues phenylalanine 240–serine 341.

The protein resides in the nucleus. This is B3 domain-containing protein At5g24050 from Arabidopsis thaliana (Mouse-ear cress).